A 67-amino-acid chain; its full sequence is Inosine/xanthosine triphosphatase (67 aa).

It belongs to the YjjX NTPase family. In terms of assembly, homodimer. It depends on Mg(2+) as a cofactor. Mn(2+) serves as cofactor.

The catalysed reaction is XTP + H2O = XDP + phosphate + H(+). The enzyme catalyses ITP + H2O = IDP + phosphate + H(+). In terms of biological role, phosphatase that hydrolyzes non-canonical purine nucleotides such as XTP and ITP to their respective diphosphate derivatives. Probably excludes non-canonical purines from DNA/RNA precursor pool, thus preventing their incorporation into DNA/RNA and avoiding chromosomal lesions. The sequence is that of Inosine/xanthosine triphosphatase from Enterobacter cloacae.